Consider the following 74-residue polypeptide: Acyl carrier protein (74 aa).

One can recognise a Carrier domain in the interval 1–74 (MFEKVRKIIA…DVVEYIKNNS (74 aa)). Ser34 is modified (O-(pantetheine 4'-phosphoryl)serine).

Belongs to the acyl carrier protein (ACP) family. In terms of processing, 4'-phosphopantetheine is transferred from CoA to a specific serine of apo-ACP by AcpS. This modification is essential for activity because fatty acids are bound in thioester linkage to the sulfhydryl of the prosthetic group.

Its subcellular location is the cytoplasm. The protein operates within lipid metabolism; fatty acid biosynthesis. Functionally, carrier of the growing fatty acid chain in fatty acid biosynthesis. This is Acyl carrier protein from Acetivibrio thermocellus (strain ATCC 27405 / DSM 1237 / JCM 9322 / NBRC 103400 / NCIMB 10682 / NRRL B-4536 / VPI 7372) (Clostridium thermocellum).